We begin with the raw amino-acid sequence, 387 residues long: NADPH-dependent aldehyde reductase YqhD (387 aa).

NADP(+) is bound by residues Gly38, Ser40, Asn68, Gly95, Ser96, Asp99, Thr138, Asn147, Gly149, Lys160, Tyr179, and Thr182. Zn(2+)-binding residues include Asp194, His198, His267, and His281.

The protein belongs to the iron-containing alcohol dehydrogenase family. As to quaternary structure, homodimer. The crystals contain two dimers in the asymmetric unit. Zn(2+) is required as a cofactor.

The enzyme catalyses a primary alcohol + NADP(+) = an aldehyde + NADPH + H(+). It catalyses the reaction butan-1-ol + NADP(+) = butanal + NADPH + H(+). It carries out the reaction 1-propanol + NADP(+) = propanal + NADPH + H(+). The catalysed reaction is allyl alcohol + NADP(+) = acrolein + NADPH + H(+). Its function is as follows. Exhibits NADPH-dependent reductase activity for a broad range of short-chain aldehydes. Shows highest catalytic efficiency toward butanal, propanal and the highly toxic aldehydes acrolein and malondialdehyde (MDA), which are produced mainly during lipid peroxidation. Mediates resistance to reactive oxygen species (ROS) elicitors, such as paraquat and potassium tellurite, probably by protecting the cell against the toxic effects of reactive aldehydes derived from membrane lipid peroxidation. Also acts, with lower efficiency, on acetaldehyde, glyceraldehyde, glycolaldehyde, methylglyoxal, glyoxal and hydroxyacetone. Could be involved in glyoxal metabolism, by catalyzing the reduction of glyoxal to glycolaldehyde, and further to 1,2-ethandiol. Catalyzes the reduction of isobutyraldehyde (2-methylpropanal) to isobutanol, and probably contributes to the production of isobutanol. Can probably catalyze the reduction of glutaraldehyde, a widely used biocide, to 1,5-pentanediol, which is non-toxic. Overexpression of YqhD protects the cells against glutaraldehyde toxicity. Can catalyze in vitro the NADPH-dependent reduction of furfural, a natural product of lignocellulosic decomposition, to the less toxic product, furfuryl alcohol. However, it is unlikely that furfural is a physiological substrate. In contrast, Sulzenbacher et al. detected significant activities only in the presence of alcohol and NADP(+). They reported in vitro NADP(+)-dependent alcohol dehydrogenase (ADH) activity towards various alcohols, with a preference for alcohols longer than C(3), but the affinity for the substrates is poor, suggesting that these compounds are not the physiological substrates. Perez et al. did not detect dehydrogenase activity with short and medium chain alcohols such as methanol, ethanol, propanol, butanol or isopropanol. The polypeptide is NADPH-dependent aldehyde reductase YqhD (yqhD) (Escherichia coli (strain K12)).